The chain runs to 568 residues: Oxygen-dependent choline dehydrogenase (568 aa).

8–37 (DYIIIGAGSAGNTLAARLTEDAGVTVLLLE) is an FAD binding site. His-477 acts as the Proton acceptor in catalysis.

The protein belongs to the GMC oxidoreductase family. It depends on FAD as a cofactor.

The catalysed reaction is choline + A = betaine aldehyde + AH2. The enzyme catalyses betaine aldehyde + NAD(+) + H2O = glycine betaine + NADH + 2 H(+). The protein operates within amine and polyamine biosynthesis; betaine biosynthesis via choline pathway; betaine aldehyde from choline (cytochrome c reductase route): step 1/1. In terms of biological role, involved in the biosynthesis of the osmoprotectant glycine betaine. Catalyzes the oxidation of choline to betaine aldehyde and betaine aldehyde to glycine betaine at the same rate. The sequence is that of Oxygen-dependent choline dehydrogenase from Pseudomonas savastanoi pv. phaseolicola (strain 1448A / Race 6) (Pseudomonas syringae pv. phaseolicola (strain 1448A / Race 6)).